The sequence spans 33 residues: Alpha-amanitin proprotein (33 aa).

Positions 1–10 (MSDINATRLP) are excised as a propeptide. At isoleucine 11 the chain carries (3R,4R)-4,5-dihydroxyisoleucine; in form alpha-amanitin. (3R,4S)-4-hydroxyisoleucine; in form gamma-amanitin is present on isoleucine 11. A cross-link (cyclopeptide (Ile-Pro)) is located at residues 11-18 (IWGIGCNP). Positions 12 to 16 (WGIGC) form a cross-link, 2'-cysteinyl-6'-hydroxytryptophan sulfoxide (Trp-Cys). Proline 18 is modified (4-hydroxyproline). Residues 19 to 33 (SVGDEVTALLASGEA) constitute a propeptide that is removed on maturation.

The protein belongs to the MSDIN fungal toxin family. Processed by the macrocyclase-peptidase enzyme POPB to yield a toxic cyclic decapeptide. POPB first removes 10 residues from the N-terminus. Conformational trapping of the remaining peptide forces the enzyme to release this intermediate rather than proceed to macrocyclization. The enzyme rebinds the remaining peptide in a different conformation and catalyzes macrocyclization of the N-terminal 8 residues.

Major toxin belonging to the bicyclic octapeptides amatoxins that acts by binding non-competitively to RNA polymerase II and greatly slowing the elongation of transcripts from target promoters. This is Alpha-amanitin proprotein from Amanita rimosa.